Reading from the N-terminus, the 297-residue chain is tRNA pseudouridine synthase B (297 aa).

The active-site Nucleophile is the D44.

The protein belongs to the pseudouridine synthase TruB family. Type 1 subfamily.

It carries out the reaction uridine(55) in tRNA = pseudouridine(55) in tRNA. Functionally, responsible for synthesis of pseudouridine from uracil-55 in the psi GC loop of transfer RNAs. The chain is tRNA pseudouridine synthase B from Corynebacterium glutamicum (strain R).